The primary structure comprises 644 residues: Threonine--tRNA ligase (644 aa).

The region spanning 1–61 is the TGS domain; it reads MNVSIEGQML…DGTTTIEPVY (61 aa). A catalytic region spans residues 241–532; it reads DHRKLGQQLD…LIEQYAGAFP (292 aa). Positions 333, 384, and 509 each coordinate Zn(2+).

The protein belongs to the class-II aminoacyl-tRNA synthetase family. Homodimer. Zn(2+) serves as cofactor.

It is found in the cytoplasm. The catalysed reaction is tRNA(Thr) + L-threonine + ATP = L-threonyl-tRNA(Thr) + AMP + diphosphate + H(+). Functionally, catalyzes the attachment of threonine to tRNA(Thr) in a two-step reaction: L-threonine is first activated by ATP to form Thr-AMP and then transferred to the acceptor end of tRNA(Thr). Also edits incorrectly charged L-seryl-tRNA(Thr). In Nitratidesulfovibrio vulgaris (strain ATCC 29579 / DSM 644 / CCUG 34227 / NCIMB 8303 / VKM B-1760 / Hildenborough) (Desulfovibrio vulgaris), this protein is Threonine--tRNA ligase.